Consider the following 292-residue polypeptide: 4-hydroxy-tetrahydrodipicolinate synthase (292 aa).

T48 is a pyruvate binding site. The active-site Proton donor/acceptor is the Y136. K164 functions as the Schiff-base intermediate with substrate in the catalytic mechanism. Pyruvate is bound at residue I204.

It belongs to the DapA family. Homotetramer; dimer of dimers.

The protein resides in the cytoplasm. It carries out the reaction L-aspartate 4-semialdehyde + pyruvate = (2S,4S)-4-hydroxy-2,3,4,5-tetrahydrodipicolinate + H2O + H(+). It functions in the pathway amino-acid biosynthesis; L-lysine biosynthesis via DAP pathway; (S)-tetrahydrodipicolinate from L-aspartate: step 3/4. Catalyzes the condensation of (S)-aspartate-beta-semialdehyde [(S)-ASA] and pyruvate to 4-hydroxy-tetrahydrodipicolinate (HTPA). This Acetivibrio thermocellus (strain ATCC 27405 / DSM 1237 / JCM 9322 / NBRC 103400 / NCIMB 10682 / NRRL B-4536 / VPI 7372) (Clostridium thermocellum) protein is 4-hydroxy-tetrahydrodipicolinate synthase.